A 149-amino-acid chain; its full sequence is MNPKRKQRLIIVSFLVIGVSATVGLIMAALSSNVNHFYNPTEVAQGAAPVDKSIRVGGMVVDGSVSRDGQSLAVAFTVTDYNSNVDVKYTGILPDLFREGQGIVATGKLDAQGVFQAEEVLAKHDEKYMPPEVQRALDKAQDAAPAQTY.

Residues 1-8 are Cytoplasmic-facing; the sequence is MNPKRKQR. The chain crosses the membrane as a helical; Signal-anchor for type II membrane protein span at residues 9-29; it reads LIIVSFLVIGVSATVGLIMAA. Over 30–149 the chain is Periplasmic; sequence LSSNVNHFYN…AQDAAPAQTY (120 aa). The heme site is built by His-124 and Tyr-128.

The protein belongs to the CcmE/CycJ family.

It is found in the cell inner membrane. Functionally, heme chaperone required for the biogenesis of c-type cytochromes. Transiently binds heme delivered by CcmC and transfers the heme to apo-cytochromes in a process facilitated by CcmF and CcmH. This chain is Cytochrome c-type biogenesis protein CcmE, found in Hahella chejuensis (strain KCTC 2396).